The following is a 497-amino-acid chain: Galactose/methyl galactoside import ATP-binding protein MglA (497 aa).

2 ABC transporter domains span residues 6-241 (LEIK…VGRS) and 252-497 (VPGE…AKYL). 38 to 45 (GENGAGKS) is a binding site for ATP.

This sequence belongs to the ABC transporter superfamily. Galactose/methyl galactoside importer (TC 3.A.1.2.3) family. As to quaternary structure, the complex is composed of one ATP-binding protein (MglA), two transmembrane proteins (MglC) and a solute-binding protein (MglB).

The protein localises to the cell inner membrane. It catalyses the reaction D-galactose(out) + ATP + H2O = D-galactose(in) + ADP + phosphate + H(+). It carries out the reaction methyl beta-D-galactoside(out) + ATP + H2O = methyl beta-D-galactoside(in) + ADP + phosphate + H(+). Functionally, part of the ABC transporter complex MglABC involved in galactose/methyl galactoside import. Responsible for energy coupling to the transport system. The protein is Galactose/methyl galactoside import ATP-binding protein MglA of Treponema denticola (strain ATCC 35405 / DSM 14222 / CIP 103919 / JCM 8153 / KCTC 15104).